The sequence spans 564 residues: Kelch repeat and BTB domain-containing protein 1 (564 aa).

One can recognise a BTB domain in the interval 21–88; that stretch reads CDIDIVINDE…IYGIPLSLTN (68 aa). In terms of domain architecture, BACK spans 123–219; the sequence is CIDFYIYADK…SLLSPQVIKS (97 aa). Kelch repeat units follow at residues 252–297, 298–346, 347–395, 397–441, 442–492, and 494–539; these read IELI…VLDN, IIYM…ADDE, YIYC…MLNG, IYVI…VHAG, KIYI…SVHN, and LYVG…CEPI.

In terms of assembly, interacts (via BTB domain) with host CUL3.

The protein localises to the host cytoplasm. Its function is as follows. Probable substrate-specific adapter of CUL3-containing E3 ubiquitin-protein ligases which mediate the ubiquitination and subsequent proteasomal degradation of host target proteins. This is Kelch repeat and BTB domain-containing protein 1 (KBTB1) from Camelus.